The following is a 126-amino-acid chain: Holo-[acyl-carrier-protein] synthase (126 aa).

Mg(2+) contacts are provided by Asp-8 and Glu-59.

The protein belongs to the P-Pant transferase superfamily. AcpS family. Mg(2+) is required as a cofactor.

The protein resides in the cytoplasm. It catalyses the reaction apo-[ACP] + CoA = holo-[ACP] + adenosine 3',5'-bisphosphate + H(+). Transfers the 4'-phosphopantetheine moiety from coenzyme A to a Ser of acyl-carrier-protein. This chain is Holo-[acyl-carrier-protein] synthase, found in Rickettsia akari (strain Hartford).